We begin with the raw amino-acid sequence, 293 residues long: Ankyrin repeat and SOCS box protein 11 (293 aa).

7 ANK repeats span residues Asp-36 to Met-65, Asp-69 to Ala-98, Asp-102 to Pro-131, Leu-134 to Met-163, Ser-167 to Cys-196, Gly-199 to Ser-228, and Glu-232 to Gln-259. Residues Ser-244–His-293 enclose the SOCS box domain.

This sequence belongs to the ankyrin SOCS box (ASB) family. Substrate-recognition component of the ECS(ASB11) complex, composed of asb11, cul5, elob, eloc and rnf7/rbx2. In terms of tissue distribution, expressed in the developing nervous system: localizes to neural plate margins and is abutting the proneuronal zone.

The protein localises to the endoplasmic reticulum. Its pathway is protein modification; protein ubiquitination. In terms of biological role, substrate-recognition component of a cullin-5-RING E3 ubiquitin-protein ligase complex (ECS complex, also named CRL5 complex), which mediates the ubiquitination and subsequent proteasomal degradation of target proteins. Acts as a regulator of the neuronal progenitor compartment size by maintaining the neural precursors in the proliferating undifferentiated state. The ECS(ASB11) complex acts as a positive regulator of Notch signaling pathway by mediating ubiquitination and degradation of DeltaA (dla). Also acts as a regulator of regenerative myogenesis. The protein is Ankyrin repeat and SOCS box protein 11 of Danio rerio (Zebrafish).